The sequence spans 495 residues: Aspartyl/glutamyl-tRNA(Asn/Gln) amidotransferase subunit B (495 aa).

This sequence belongs to the GatB/GatE family. GatB subfamily. As to quaternary structure, heterotrimer of A, B and C subunits.

It carries out the reaction L-glutamyl-tRNA(Gln) + L-glutamine + ATP + H2O = L-glutaminyl-tRNA(Gln) + L-glutamate + ADP + phosphate + H(+). It catalyses the reaction L-aspartyl-tRNA(Asn) + L-glutamine + ATP + H2O = L-asparaginyl-tRNA(Asn) + L-glutamate + ADP + phosphate + 2 H(+). Functionally, allows the formation of correctly charged Asn-tRNA(Asn) or Gln-tRNA(Gln) through the transamidation of misacylated Asp-tRNA(Asn) or Glu-tRNA(Gln) in organisms which lack either or both of asparaginyl-tRNA or glutaminyl-tRNA synthetases. The reaction takes place in the presence of glutamine and ATP through an activated phospho-Asp-tRNA(Asn) or phospho-Glu-tRNA(Gln). The protein is Aspartyl/glutamyl-tRNA(Asn/Gln) amidotransferase subunit B of Methanosarcina barkeri (strain Fusaro / DSM 804).